The following is a 58-amino-acid chain: UPF0391 membrane protein GM21_0108 (58 aa).

Transmembrane regions (helical) follow at residues W4–A24 and V33–G53.

The protein belongs to the UPF0391 family.

The protein resides in the cell membrane. This chain is UPF0391 membrane protein GM21_0108, found in Geobacter sp. (strain M21).